Here is a 511-residue protein sequence, read N- to C-terminus: Prolyl 3-hydroxylase OGFOD1 (511 aa).

Residues 1-20 (MTGKRGTAAGTDGSGNKKGK) form a disordered region. The 103-residue stretch at 138 to 240 (KTVDISCAQY…RLSVSGWFHG (103 aa)) folds into the Fe2OG dioxygenase domain. His156 and Asp158 together coordinate Fe cation. Residue Tyr170 participates in 2-oxoglutarate binding. A Fe cation-binding site is contributed by His219. Position 231 (Arg231) interacts with 2-oxoglutarate. A disordered region spans residues 372–403 (NEESDEGEGPSEPNTVSQQGASSEDDKVPSCS).

It belongs to the TPA1 family. Monomer. The cofactor is Fe(2+). Requires L-ascorbate as cofactor.

Its subcellular location is the cytoplasm. The protein localises to the nucleus. The catalysed reaction is [ribosomal protein uS12]-L-proline + 2-oxoglutarate + O2 = [ribosomal protein uS12]-(3S)-3-hydroxy-L-proline + succinate + CO2. Prolyl 3-hydroxylase that catalyzes 3-hydroxylation of 'Pro-62' of small ribosomal subunit uS12 (rps23), thereby regulating protein translation termination efficiency. Involved in stress granule formation. The chain is Prolyl 3-hydroxylase OGFOD1 (ogfod1) from Xenopus laevis (African clawed frog).